A 1093-amino-acid chain; its full sequence is MSQPGIPASGGAPASLQAQNGAALASGSPYTNGPVQNALLSSQESVSQGYNFQLPGSYPHPIPAKTLNPVSGQSNYGGSQGSGQTLNRPPVASNPVTPSLHSGPAPRMPLPASQNPATTPMPSSSFLPEANLPPPLNWQYNYPSTASQTNHCPRASSQPTVSGNTSLTTNHQYVSSGYPSLQNSFIKSGPSVPPLVNPPLPTTFQPGAPHGPPPAGGPPPVRALTPLTSSYRDVPQPLFNSAVNQEGITSNTNNGSMVVHSSYDEIEGGGLLATPQLTNKNPKMSRSVGYSYPSLPPGYQNTTPPGATGVPPSSLNYPSGPQAFTQTPLGANHLTTSMSGLSLQPEGLRVVNLLQERNMLPSTPLKPPVPNLHEDIQKLNCNPELFRCTLTSIPQTQALLNKAKLPLGLLLHPFKDLVQLPVVTSSTIVRCRSCRTYINPFVSFLDQRRWKCNLCYRVNDVPEEFLYNPLTRVYGEPHRRPEVQNATIEFMAPSEYMLRPPQPPVYLFVFDVSHNAVETGYLNSVCQSLLDNLDLLPGNTRTKIGFITFDSTIHFYGLQESLSQPQMLIVSDIEDVFIPMPENLLVNLNESKELVQDLLKTLPQMFTKTLETQSALGPALQAAFKLMSPTGGRMSVFQTQLPTLGVGALKPREEPNHRSSAKDIHMTPSTDFYKKLALDCSGQQVAVDLFLLSGQYSDLASLGCISRYSAGSVYYYPSYHHQHNPVQVQKLQKELQRYLTRKIGFEAVMRIRCTKGLSIHTFHGNFFVRSTDLLSLPNVNPDAGYAVQMSVEESLTDTQLVSFQSALLYTSSKGERRIRVHTLCLPVVSTLNDVFLGADVQAISGLLANMAVDRSMTASLSDARDALVNAVIDSLSAYRSSVLSNQQPGLMVPFSLRLFPLFVLALLKQKSFQTGTNARLDERIFAMCQVKNQPLVYLMLTTHPSLYRVDNLSDEGALNISDRTIPQPPILQLSVEKLSRDGAFLMDAGSVLMLWVGKNCTQNFLSQVLGVQNYASIPQPMTDLPELDTPESARIIAFISWLREQRPFFPILYVIRDESPMKANFLQNMIEDRTESALSYYEFLLHIQQQVNK.

4 disordered regions span residues 1–29, 60–168, 189–226, and 294–328; these read MSQP…SGSP, HPIP…TSLT, GPSV…ALTP, and SLPP…TQTP. Polar residues-rich tracts occupy residues 112 to 126 and 138 to 168; these read ASQN…SSSF and WQYN…TSLT. Pro residues-rich tracts occupy residues 191-201 and 209-221; these read SVPPLVNPPLP and PHGP…PPPV. Residues 299-328 show a composition bias toward polar residues; that stretch reads YQNTTPPGATGVPPSSLNYPSGPQAFTQTP. Positions 431, 434, 452, and 455 each coordinate Zn(2+). The tract at residues 431 to 455 is zinc finger-like; sequence CRSCRTYINPFVSFLDQRRWKCNLC. A Gelsolin-like repeat occupies 966 to 1038; the sequence is PQPPILQLSV…TPESARIIAF (73 aa).

It belongs to the SEC23/SEC24 family. SEC24 subfamily. COPII is composed of at least five proteins: the Sec23/24 complex, the Sec13/31 complex and Sar1. Interacts with TMED2. Interacts (as part of the Sec23/24 complex) with SEC22B; recruits SEC22B into COPII-coated vesicles for its transport from the endoplasmic reticulum to the Golgi. Interacts with STING1; promoting STING1 translocation to COPII vesicles in a STEEP1-dependent manner. Interacts with TMEM39A. Interacts with SACM1L; this interaction is reduced in the absence of TMEM39A. Interacts with kinase FAM20C; transport of FAM20C from the endoplasmic reticulum to the Golgi is likely to be mediated by COPII vesicles.

It localises to the cytoplasmic vesicle. It is found in the COPII-coated vesicle membrane. The protein resides in the endoplasmic reticulum membrane. Its subcellular location is the cytoplasm. The protein localises to the cytosol. In terms of biological role, component of the coat protein complex II (COPII) which promotes the formation of transport vesicles from the endoplasmic reticulum (ER). The coat has two main functions, the physical deformation of the endoplasmic reticulum membrane into vesicles and the selection of cargo molecules for their transport to the Golgi complex. Plays a central role in cargo selection within the COPII complex and together with SEC24B may have a different specificity compared to SEC24C and SEC24D. May package preferentially cargos with cytoplasmic DxE or LxxLE motifs and may also recognize conformational epitopes. The protein is Protein transport protein Sec24A of Homo sapiens (Human).